Here is a 239-residue protein sequence, read N- to C-terminus: Ditrans,polycis-undecaprenyl-diphosphate synthase ((2E,6E)-farnesyl-diphosphate specific) (239 aa).

Residue Asp18 is part of the active site. Asp18 contributes to the Mg(2+) binding site. Substrate is bound by residues Gly19–Arg22, Trp23, Arg31, His35, and Ser63–Glu65. The active-site Proton acceptor is Asn66. Residues Trp67, Arg69, Arg186, and Arg192 to Ser194 contribute to the substrate site. Mg(2+) is bound at residue Glu205.

Belongs to the UPP synthase family. As to quaternary structure, homodimer. Mg(2+) is required as a cofactor.

It catalyses the reaction 8 isopentenyl diphosphate + (2E,6E)-farnesyl diphosphate = di-trans,octa-cis-undecaprenyl diphosphate + 8 diphosphate. Functionally, catalyzes the sequential condensation of isopentenyl diphosphate (IPP) with (2E,6E)-farnesyl diphosphate (E,E-FPP) to yield (2Z,6Z,10Z,14Z,18Z,22Z,26Z,30Z,34E,38E)-undecaprenyl diphosphate (di-trans,octa-cis-UPP). UPP is the precursor of glycosyl carrier lipid in the biosynthesis of bacterial cell wall polysaccharide components such as peptidoglycan and lipopolysaccharide. This chain is Ditrans,polycis-undecaprenyl-diphosphate synthase ((2E,6E)-farnesyl-diphosphate specific), found in Haemophilus influenzae (strain ATCC 51907 / DSM 11121 / KW20 / Rd).